The primary structure comprises 618 residues: NAD(P)H-quinone oxidoreductase subunit 5, organellar chromatophore 2 (618 aa).

The next 17 membrane-spanning stretches (helical) occupy residues 16–36 (LIPI…TGWI), 43–63 (TPAY…SLAL), 99–119 (LAAL…ALGY), 129–149 (FFAL…SDSL), 152–172 (SYFL…FWYA), 190–210 (GDVM…GMEF), 220–240 (NTLT…GPIG), 267–287 (SVVV…LHHS), 291–311 (IAVL…VSIA), 318–335 (TLSY…IAIA), 348–368 (AHAI…AVSN), 390–410 (LIAG…CFGL), 419–438 (APWF…LNLT), 461–481 (WQMA…PWMM), 495–515 (AITG…GAIV), 553–573 (IVSG…NGFV), and 597–617 (SYIL…SWLV).

This sequence belongs to the complex I subunit 5 family. In terms of assembly, NDH is composed of at least 16 different subunits, 5 of which are encoded in the nucleus.

It localises to the plastid. The protein resides in the organellar chromatophore thylakoid membrane. It catalyses the reaction a plastoquinone + NADH + (n+1) H(+)(in) = a plastoquinol + NAD(+) + n H(+)(out). The catalysed reaction is a plastoquinone + NADPH + (n+1) H(+)(in) = a plastoquinol + NADP(+) + n H(+)(out). In terms of biological role, NDH shuttles electrons from NAD(P)H:plastoquinone, via FMN and iron-sulfur (Fe-S) centers, to quinones in the photosynthetic chain and possibly in a chloroplast respiratory chain. The immediate electron acceptor for the enzyme in this species is believed to be plastoquinone. Couples the redox reaction to proton translocation, and thus conserves the redox energy in a proton gradient. In Paulinella chromatophora, this protein is NAD(P)H-quinone oxidoreductase subunit 5, organellar chromatophore 2 (ndhF2).